Reading from the N-terminus, the 695-residue chain is Follicle-stimulating hormone receptor (695 aa).

Residues Met1–Gly17 form the signal peptide. 2 disulfides stabilise this stretch: Cys18-Cys25 and Cys23-Cys32. The 29-residue stretch at Cys18–Arg46 folds into the LRRNT domain. Residues Cys18–Arg366 lie on the Extracellular side of the membrane. 9 LRR repeats span residues Val49–Leu72, Glu73–Leu97, His98–Asn118, Leu119–Ser143, Leu144–Ser169, Phe170–Gly192, Thr193–Gly216, Ala217–Asn240, and Ile241–Asp259. N-linked (GlcNAc...) asparagine glycosylation occurs at Asn93. Asn191 and Asn199 each carry an N-linked (GlcNAc...) asparagine glycan. Disulfide bonds link Cys275–Cys346, Cys276–Cys292, Cys276–Cys356, and Cys292–Cys338. A glycan (N-linked (GlcNAc...) asparagine) is linked at Asn293. Tyr335 carries the sulfotyrosine modification. A helical membrane pass occupies residues Val367–Leu387. At Ile388–Arg398 the chain is on the cytoplasmic side. Residues Phe399–Ala419 traverse the membrane as a helical segment. Residues Ser420–Ala444 are Extracellular-facing. A helical membrane pass occupies residues Ala445 to Leu465. The Cytoplasmic portion of the chain corresponds to Glu466–Ala487. Residues Ile488–Ile508 form a helical membrane-spanning segment. Residues Ser509 to Gln528 are Extracellular-facing. Residues Leu529–Ala550 form a helical membrane-spanning segment. Over His551–Arg573 the chain is Cytoplasmic. The chain crosses the membrane as a helical span at residues Met574–Ser594. The Extracellular portion of the chain corresponds to Ala595 to Lys608. A helical membrane pass occupies residues Ile609–Phe629. At Thr630–Asn695 the chain is on the cytoplasmic side.

It belongs to the G-protein coupled receptor 1 family. FSH/LSH/TSH subfamily. In terms of assembly, homotrimer. Functions as a homotrimer binding the FSH hormone heterodimer composed of CGA and FSHB. Interacts with ARRB2. Interacts with APPL2; interaction is independent of follicle stimulating hormone stimulation. Post-translationally, N-glycosylated; indirectly required for FSH-binding, possibly via a conformational change that allows high affinity binding of hormone. In terms of processing, sulfated.

Its subcellular location is the cell membrane. In terms of biological role, g protein-coupled receptor for follitropin, the follicle-stimulating hormone. Through cAMP production activates the downstream PI3K-AKT and ERK1/ERK2 signaling pathways. This chain is Follicle-stimulating hormone receptor (FSHR), found in Felis catus (Cat).